The primary structure comprises 1007 residues: Serine/threonine-protein kinase atg1 (1007 aa).

Residues 30 to 336 (YTRLSEIGRG…FDVYFAHKVL (307 aa)) enclose the Protein kinase domain. ATP-binding positions include 36–44 (IGRGSFAVV) and lysine 59. The active-site Proton acceptor is aspartate 174. Disordered regions lie at residues 343 to 489 (LVAD…KEHA), 524 to 586 (GGQA…PTSA), 795 to 817 (RLPS…GSGT), and 878 to 900 (SRPG…DGGQ). The segment covering 373–387 (MKRENALSGGVRDEP) has biased composition (basic and acidic residues). Positions 396–410 (AMTQSPRPETPSTPM) are enriched in polar residues. Residues 477 to 489 (KPVEKAKDEKEHA) are compositionally biased toward basic and acidic residues. A compositionally biased stretch (low complexity) spans 534-555 (SGAAPGTPPAGGSSPHASPSKA). Over residues 563–579 (SRADSAHVRQNSYDRRY) the composition is skewed to basic and acidic residues. The segment covering 805-817 (SNLSVGSSLGSGT) has biased composition (low complexity). Basic and acidic residues predominate over residues 887 to 896 (DRADARRDNE).

It belongs to the protein kinase superfamily. Ser/Thr protein kinase family. APG1/unc-51/ULK1 subfamily. In terms of assembly, homodimer. Forms a ternary complex with ATG13 and ATG17.

It is found in the cytoplasm. Its subcellular location is the preautophagosomal structure membrane. It carries out the reaction L-seryl-[protein] + ATP = O-phospho-L-seryl-[protein] + ADP + H(+). The enzyme catalyses L-threonyl-[protein] + ATP = O-phospho-L-threonyl-[protein] + ADP + H(+). In terms of biological role, serine/threonine protein kinase involved in the cytoplasm to vacuole transport (Cvt) and found to be essential in autophagy, where it is required for the formation of autophagosomes. Involved in the clearance of protein aggregates which cannot be efficiently cleared by the proteasome. Required for selective autophagic degradation of the nucleus (nucleophagy) as well as for mitophagy which contributes to regulate mitochondrial quantity and quality by eliminating the mitochondria to a basal level to fulfill cellular energy requirements and preventing excess ROS production. Also involved in endoplasmic reticulum-specific autophagic process, in selective removal of ER-associated degradation (ERAD) substrates. Plays a key role in ATG9 and ATG23 cycling through the pre-autophagosomal structure and is necessary to promote ATG18 binding to ATG9 through phosphorylation of ATG9. Catalyzes phosphorylation of ATG4, decreasing the interaction between ATG4 and ATG8 and impairing deconjugation of PE-conjugated forms of ATG8. The chain is Serine/threonine-protein kinase atg1 from Aspergillus niger (strain ATCC MYA-4892 / CBS 513.88 / FGSC A1513).